Consider the following 82-residue polypeptide: Small ribosomal subunit protein bS18 (82 aa).

Polar residues predominate over residues Met-1–Arg-10. Positions Met-1–Pro-21 are disordered.

The protein belongs to the bacterial ribosomal protein bS18 family. As to quaternary structure, part of the 30S ribosomal subunit. Forms a tight heterodimer with protein bS6.

Its function is as follows. Binds as a heterodimer with protein bS6 to the central domain of the 16S rRNA, where it helps stabilize the platform of the 30S subunit. This Bartonella tribocorum (strain CIP 105476 / IBS 506) protein is Small ribosomal subunit protein bS18.